A 943-amino-acid polypeptide reads, in one-letter code: UvrABC system protein A (943 aa).

32-39 (GLSGSGKS) contributes to the ATP binding site. Residues 251-278 (CPVCGFTVPELEPRLFSFNAPFGSCPTC) form a C4-type zinc finger. 2 ABC transporter domains span residues 308–589 (WNPI…KKSI) and 609–937 (GSGR…QYLK). 641–648 (GVSGSGKS) contacts ATP. A C4-type zinc finger spans residues 740 to 766 (CEACSGDGIIKIEMHFLPDVYVPCEVC).

This sequence belongs to the ABC transporter superfamily. UvrA family. Forms a heterotetramer with UvrB during the search for lesions.

It localises to the cytoplasm. The UvrABC repair system catalyzes the recognition and processing of DNA lesions. UvrA is an ATPase and a DNA-binding protein. A damage recognition complex composed of 2 UvrA and 2 UvrB subunits scans DNA for abnormalities. When the presence of a lesion has been verified by UvrB, the UvrA molecules dissociate. In Streptococcus mutans serotype c (strain ATCC 700610 / UA159), this protein is UvrABC system protein A.